The sequence spans 71 residues: Light-harvesting protein B-800/850 alpha chain (71 aa).

Over 1–15 (MNQGKVWRVVKPTVG) the chain is Cytoplasmic. The helical transmembrane segment at 16–36 (VPVYLGAVAVTALILHGGLLA) threads the bilayer. Residue H31 participates in a bacteriochlorophyll binding. Topologically, residues 37–50 (KTDWFGAYWNGGKK) are periplasmic. The chain crosses the membrane as a helical span at residues 51 to 71 (AAAAAAAVAPAPVAAPQAPAQ).

Belongs to the antenna complex alpha subunit family. An alpha/beta heterodimer conjugated to 3 bacteriochlorophyll molecules. The core complex is formed by different alpha and beta chains, binding bacteriochlorophyll molecules, and arranged most probably in tetrameric structures disposed around the reaction center. The non-pigmented gamma chains may constitute additional components.

Its subcellular location is the cell membrane. In terms of biological role, antenna complexes are light-harvesting systems, which transfer the excitation energy to the reaction centers. This is Light-harvesting protein B-800/850 alpha chain (pucA) from Rubrivivax gelatinosus (Rhodocyclus gelatinosus).